The primary structure comprises 129 residues: Small ribosomal subunit protein uS9 (129 aa).

The protein belongs to the universal ribosomal protein uS9 family.

In Helicobacter hepaticus (strain ATCC 51449 / 3B1), this protein is Small ribosomal subunit protein uS9.